A 668-amino-acid chain; its full sequence is tRNA 5-methylaminomethyl-2-thiouridine biosynthesis bifunctional protein MnmC (668 aa).

Positions 1–245 (MKHYSIQPAN…KREMLCGVME (245 aa)) are tRNA (mnm(5)s(2)U34)-methyltransferase. Residues 270–668 (IGGGIASALL…LLKGKAVKAG (399 aa)) form an FAD-dependent cmnm(5)s(2)U34 oxidoreductase region.

This sequence in the N-terminal section; belongs to the methyltransferase superfamily. tRNA (mnm(5)s(2)U34)-methyltransferase family. The protein in the C-terminal section; belongs to the DAO family. FAD is required as a cofactor.

The protein resides in the cytoplasm. The enzyme catalyses 5-aminomethyl-2-thiouridine(34) in tRNA + S-adenosyl-L-methionine = 5-methylaminomethyl-2-thiouridine(34) in tRNA + S-adenosyl-L-homocysteine + H(+). Functionally, catalyzes the last two steps in the biosynthesis of 5-methylaminomethyl-2-thiouridine (mnm(5)s(2)U) at the wobble position (U34) in tRNA. Catalyzes the FAD-dependent demodification of cmnm(5)s(2)U34 to nm(5)s(2)U34, followed by the transfer of a methyl group from S-adenosyl-L-methionine to nm(5)s(2)U34, to form mnm(5)s(2)U34. The chain is tRNA 5-methylaminomethyl-2-thiouridine biosynthesis bifunctional protein MnmC from Escherichia coli O6:H1 (strain CFT073 / ATCC 700928 / UPEC).